Here is a 560-residue protein sequence, read N- to C-terminus: Serine palmitoyltransferase 2 (560 aa).

The helical transmembrane segment at 65–85 (PMLVAVLTYVGYGVLTLFGYL) threads the bilayer. An N6-(pyridoxal phosphate)lysine modification is found at K377.

The protein belongs to the class-II pyridoxal-phosphate-dependent aminotransferase family. In terms of assembly, component of the serine palmitoyltransferase (SPT) complex, which is composed of SPTLC1, SPTLC2 or SPTLC3 and SPTSSA or SPTSSB. The heterodimer consisting of SPTLC1 and SPTLC2/SPTLC3 forms the catalytic core of the enzyme, while SPTSSA or SPTSSB subunits determine substrate specificity. SPT also interacts with ORMDL proteins, especially ORMDL3, which negatively regulate SPT activity in the presence of ceramides. Forms dimers of heterodimers with SPTLC1. The cofactor is pyridoxal 5'-phosphate.

The protein resides in the endoplasmic reticulum membrane. The catalysed reaction is L-serine + hexadecanoyl-CoA + H(+) = 3-oxosphinganine + CO2 + CoA. It catalyses the reaction octadecanoyl-CoA + L-serine + H(+) = 3-oxoeicosasphinganine + CO2 + CoA. It participates in lipid metabolism; sphingolipid metabolism. Its activity is regulated as follows. SPT complex catalytic activity is negatively regulated by ORMDL proteins, including ORMDL3, in the presence of ceramides. This mechanism allows to maintain ceramide levels at sufficient concentrations for the production of complex sphingolipids, but which prevents the accumulation of ceramides to levels that trigger apoptosis. In terms of biological role, component of the serine palmitoyltransferase multisubunit enzyme (SPT) that catalyzes the initial and rate-limiting step in sphingolipid biosynthesis by condensing L-serine and activated acyl-CoA (most commonly palmitoyl-CoA) to form long-chain bases. The SPT complex is composed of SPTLC1, SPTLC2 or SPTLC3 and SPTSSA or SPTSSB. Within this complex, the heterodimer consisting of SPTLC1 and SPTLC2/SPTLC3 forms the catalytic core. The composition of the serine palmitoyltransferase (SPT) complex determines the substrate preference. The SPTLC1-SPTLC2-SPTSSA complex shows a strong preference for C16-CoA substrate, while the SPTLC1-SPTLC3-SPTSSA isozyme uses both C14-CoA and C16-CoA as substrates, with a slight preference for C14-CoA. The SPTLC1-SPTLC2-SPTSSB complex shows a strong preference for C18-CoA substrate, while the SPTLC1-SPTLC3-SPTSSB isozyme displays an ability to use a broader range of acyl-CoAs, without apparent preference. Crucial for adipogenesis. The protein is Serine palmitoyltransferase 2 (SPTLC2) of Cricetulus griseus (Chinese hamster).